A 159-amino-acid chain; its full sequence is NADH-quinone oxidoreductase subunit B (159 aa).

C36, C37, C102, and C132 together coordinate [4Fe-4S] cluster.

Belongs to the complex I 20 kDa subunit family. As to quaternary structure, NDH-1 is composed of 14 different subunits. Subunits NuoB, C, D, E, F, and G constitute the peripheral sector of the complex. The cofactor is [4Fe-4S] cluster.

The protein resides in the cell inner membrane. It carries out the reaction a quinone + NADH + 5 H(+)(in) = a quinol + NAD(+) + 4 H(+)(out). Functionally, NDH-1 shuttles electrons from NADH, via FMN and iron-sulfur (Fe-S) centers, to quinones in the respiratory chain. Couples the redox reaction to proton translocation (for every two electrons transferred, four hydrogen ions are translocated across the cytoplasmic membrane), and thus conserves the redox energy in a proton gradient. This Delftia acidovorans (strain DSM 14801 / SPH-1) protein is NADH-quinone oxidoreductase subunit B.